Consider the following 114-residue polypeptide: Evasin P1096 (114 aa).

The signal sequence occupies residues 1 to 23 (MELNAFTILHIAVFIAVGYYANT). 3 cysteine pairs are disulfide-bonded: Cys47-Cys65, Cys51-Cys67, and Cys61-Cys78. The N-linked (GlcNAc...) asparagine glycan is linked to Asn50. The interval 89–114 (DPSQDPSIDEAAPRESVSKRRSNGES) is disordered. Over residues 99 to 114 (AAPRESVSKRRSNGES) the composition is skewed to basic and acidic residues.

Its subcellular location is the secreted. Salivary chemokine-binding protein which binds to host chemokine CXCL8. This chain is Evasin P1096, found in Ixodes ricinus (Common tick).